A 278-amino-acid polypeptide reads, in one-letter code: Bifunctional protein FolD (278 aa).

NADP(+)-binding positions include 165 to 167 (GRS), Ser190, and Thr231.

Belongs to the tetrahydrofolate dehydrogenase/cyclohydrolase family. Homodimer.

It carries out the reaction (6R)-5,10-methylene-5,6,7,8-tetrahydrofolate + NADP(+) = (6R)-5,10-methenyltetrahydrofolate + NADPH. The catalysed reaction is (6R)-5,10-methenyltetrahydrofolate + H2O = (6R)-10-formyltetrahydrofolate + H(+). It participates in one-carbon metabolism; tetrahydrofolate interconversion. Catalyzes the oxidation of 5,10-methylenetetrahydrofolate to 5,10-methenyltetrahydrofolate and then the hydrolysis of 5,10-methenyltetrahydrofolate to 10-formyltetrahydrofolate. In Clostridium acetobutylicum (strain ATCC 824 / DSM 792 / JCM 1419 / IAM 19013 / LMG 5710 / NBRC 13948 / NRRL B-527 / VKM B-1787 / 2291 / W), this protein is Bifunctional protein FolD.